We begin with the raw amino-acid sequence, 107 residues long: uncharacterized protein (107 aa).

Positions 88–97 (EEKKEKDKGK) are enriched in basic and acidic residues. The disordered stretch occupies residues 88–107 (EEKKEKDKGKKGLLSRLKFW). Residues 98–107 (KGLLSRLKFW) are compositionally biased toward basic residues.

This is an uncharacterized protein from Methanocaldococcus jannaschii (strain ATCC 43067 / DSM 2661 / JAL-1 / JCM 10045 / NBRC 100440) (Methanococcus jannaschii).